The sequence spans 789 residues: Glycerol-3-phosphate acyltransferase (789 aa).

An HXXXXD motif motif is present at residues 275 to 280 (SHRSYI).

The protein belongs to the GPAT/DAPAT family.

The protein resides in the cell membrane. The catalysed reaction is sn-glycerol 3-phosphate + an acyl-CoA = a 1-acyl-sn-glycero-3-phosphate + CoA. Its pathway is phospholipid metabolism; CDP-diacylglycerol biosynthesis; CDP-diacylglycerol from sn-glycerol 3-phosphate: step 1/3. The protein is Glycerol-3-phosphate acyltransferase of Mycobacterium tuberculosis (strain ATCC 25177 / H37Ra).